The following is an 818-amino-acid chain: H(+)/Cl(-) exchange transporter 3 (818 aa).

At 1–125 (MESEQLFHRG…WEMTKSLYDA (125 aa)) the chain is on the cytoplasmic side. 3 short sequence motifs (di-leucine internalization motif; mediates targeting to late endosome and lysosome membranes) span residues 28–29 (LL), 46–47 (LL), and 71–75 (LLDLL). The chain crosses the membrane as a helical span at residues 126-163 (WSGWLVVTLTGLASGALAGLIDIAADWMTDLKEGICLS). A glycan (N-linked (GlcNAc...) asparagine) is linked at asparagine 177. A helical membrane pass occupies residues 209 to 232 (MNYIMYIFWALSFAFLAVSLVKVF). Positions 238-242 (GSGIP) match the Selectivity filter part_1 motif. Serine 239 is a chloride binding site. The helical intramembrane region spans 241–248 (IPEIKTIL). 2 helical membrane passes run 258 to 276 (GKWT…VASG) and 282 to 301 (EGPL…YLFP). The Selectivity filter part_2 motif lies at 280–284 (GKEGP). Intramembrane regions (helical) lie at residues 313-325 (VLSA…VSVA) and 329-337 (PIGGVLFSL). Transmembrane regions (helical) follow at residues 349-367 (LWRS…RSIN), 391-416 (FPFI…AWCR), and 423-443 (FGKY…VIAF). Asparagine 451 and asparagine 479 each carry an N-linked (GlcNAc...) asparagine glycan. A run of 2 helical transmembrane segments spans residues 500-520 (IWQL…TFGI) and 525-544 (GLFI…VGIA). The Selectivity filter part_3 signature appears at 525 to 529 (GLFIP). Residue phenylalanine 527 participates in chloride binding. Intramembrane regions (helical) lie at residues 572–586 (GLYA…LGGV) and 590–601 (TVSLVVIVFELT). Positions 602–605 (GGLE) form an intramembrane region, note=Loop between two helices. Residues 606–624 (YIVPLMAAVMTSKWVGDAF) form a helical membrane-spanning segment. Residues 625 to 818 (GREGIYEAHI…NQDPASIMFN (194 aa)) are Cytoplasmic-facing. Tyrosine 630 is a chloride binding site. 2 CBS domains span residues 658–722 (MRPR…ARKK) and 755–812 (LDMS…NQDP). Residues 689–691 (YNG) and 796–799 (TKKD) each bind ATP.

It belongs to the chloride channel (TC 2.A.49) family. ClC-3/CLCN3 subfamily. In terms of assembly, monomer and homodimer. Forms heterodimers with CLCN4. Interacts with GOPC, PDZK1 and NHERF1/EBP50. N-glycosylated. As to expression, expressed primarily in tissues derived from neuroectoderm. Within the brain, its expression is particularly evident in the hippocampus, olfactory cortex, and olfactory bulb. Highly expressed in aortic and coronary vascular smooth muscle cells, and aortic endothelial cells. Also expressed in tracheal and alveolar epithelial cells, and intima and media of the pulmonary vessels. Expressed in bronchus and colon (at protein level).

It is found in the early endosome membrane. The protein resides in the late endosome membrane. The protein localises to the lysosome membrane. It localises to the cell membrane. Its subcellular location is the golgi apparatus membrane. It is found in the cell projection. The protein resides in the ruffle membrane. Strongly outwardly rectifying, electrogenic H(+)/Cl(-)exchanger which mediates the exchange of chloride ions against protons. The CLC channel family contains both chloride channels and proton-coupled anion transporters that exchange chloride or another anion for protons. The presence of conserved gating glutamate residues is typical for family members that function as antiporters. Functionally, strongly outwardly rectifying, electrogenic H(+)/Cl(-)exchanger which mediates the exchange of chloride ions against protons. The protein is H(+)/Cl(-) exchange transporter 3 (CLCN3) of Homo sapiens (Human).